The primary structure comprises 317 residues: Carbonic anhydrase 6 (317 aa).

Positions 1 to 17 (MRALVSVVSLFFLGIQA) are cleaved as a signal peptide. The 259-residue stretch at 19–277 (SDWSYSGDDG…NNHRVVEANF (259 aa)) folds into the Alpha-carbonic anhydrase domain. Cysteines 41 and 223 form a disulfide. Catalysis depends on H84, which acts as the Proton donor/acceptor. H110, H112, and H137 together coordinate Zn(2+). 219-220 (TT) serves as a coordination point for substrate. A glycan (N-linked (GlcNAc...) asparagine) is linked at N255.

This sequence belongs to the alpha-carbonic anhydrase family. Requires Zn(2+) as cofactor. Major constituent of saliva.

The protein localises to the secreted. The enzyme catalyses hydrogencarbonate + H(+) = CO2 + H2O. Its function is as follows. Reversible hydration of carbon dioxide. Its role in saliva is unknown. The protein is Carbonic anhydrase 6 (Ca6) of Mus musculus (Mouse).